Reading from the N-terminus, the 514-residue chain is Calcium-binding mitochondrial carrier protein SCaMC-2 (514 aa).

Residues 1–234 (MARPRSLVSP…EKQTGMWWRH (234 aa)) lie on the Mitochondrial intermembrane side of the membrane. EF-hand domains follow at residues 56-91 (EHERRLQILFQELDVNKDGAICINDLAVGLKRLGVH), 92-122 (RTELELRKIVKAGDKDQDGQLDFDEFVHYLR), 123-158 (DHEKKLRLVFKSLDKKNDGRIDAQEIMQSLRDLGVN), and 159-194 (ISEQQAEKILKSMDKNGTMTIDWNEWRDYHLLHSAE). Residues Asp-69, Asn-71, Asp-73, Asp-80, Asp-105, Asp-107, Asp-109, Gln-111, and Glu-116 each contribute to the Ca(2+) site. Solcar repeat units lie at residues 229–315 (GMWW…IKRI), 323–408 (LGIH…LKNA), and 420–508 (PGVF…LKLT). Residues 235 to 252 (LVAGGGAGAVSRTCTAPL) form a helical membrane-spanning segment. Residues 253–289 (DRLKVLMQVHASRSNNMSILGGFTHMIREGGFRSLWR) lie on the Mitochondrial matrix side of the membrane. A helical membrane pass occupies residues 290-309 (GNGINVIKIAPESAIKFMAY). The Mitochondrial intermembrane portion of the chain corresponds to 310-332 (EQIKRIIGSNQETLGIHERFVAG). A helical transmembrane segment spans residues 333-346 (SLAGVIAQSSIYPM). Over 347–382 (EVLKTRMALRKTGQYQGVLDCGKKILLQEGLSAFYK) the chain is Mitochondrial matrix. A helical membrane pass occupies residues 383–402 (GYVPNMLGIIPYAGIDLAVY). The Mitochondrial intermembrane portion of the chain corresponds to 403-425 (ETLKNAWLQRYATSSADPGVFVL). The chain crosses the membrane as a helical span at residues 426–443 (LACGTVSSTCGQLASYPL). At 444 to 482 (ALVRTRMQAEASVEGAPQMTMSKLFKHIVKTEGAFGLYR) the chain is on the mitochondrial matrix side. A helical membrane pass occupies residues 483–502 (GLAPNFMKVIPAVSISYVVY). The Mitochondrial intermembrane portion of the chain corresponds to 503 to 514 (ENLKLTLGVQSR).

It belongs to the mitochondrial carrier (TC 2.A.29) family.

The protein resides in the mitochondrion inner membrane. In terms of biological role, calcium-dependent mitochondrial solute carrier. In Xenopus laevis (African clawed frog), this protein is Calcium-binding mitochondrial carrier protein SCaMC-2 (slc25a25).